We begin with the raw amino-acid sequence, 341 residues long: NADH-ubiquinone oxidoreductase chain 2 (341 aa).

Transmembrane regions (helical) follow at residues 8 to 28 (IFFIMLISGTLITISSNSWLG), 61 to 81 (FLTQAFASSILLFAIILMMMF), 95 to 117 (LLILSTLLLKSGAAPFHFWFPGV), 145 to 165 (LNINFFYFTILLSMIIGALGG), 195 to 215 (LLWLTYFLLYSILSMSIILMF), 238 to 258 (FFMFLNLLSLGGLPPFLGFLP), 266 to 286 (LVEMNQLFLLFIAVCLTLITL), and 320 to 340 (ILTMNFISIMGLLIITLIYLI).

This sequence belongs to the complex I subunit 2 family.

Its subcellular location is the mitochondrion inner membrane. It catalyses the reaction a ubiquinone + NADH + 5 H(+)(in) = a ubiquinol + NAD(+) + 4 H(+)(out). Its function is as follows. Core subunit of the mitochondrial membrane respiratory chain NADH dehydrogenase (Complex I) that is believed to belong to the minimal assembly required for catalysis. Complex I functions in the transfer of electrons from NADH to the respiratory chain. The immediate electron acceptor for the enzyme is believed to be ubiquinone. The chain is NADH-ubiquinone oxidoreductase chain 2 from Aedes aegypti (Yellowfever mosquito).